Here is a 102-residue protein sequence, read N- to C-terminus: Small ribosomal subunit protein eS24 (102 aa).

It belongs to the eukaryotic ribosomal protein eS24 family.

This chain is Small ribosomal subunit protein eS24 (rps24e), found in Haloarcula marismortui (strain ATCC 43049 / DSM 3752 / JCM 8966 / VKM B-1809) (Halobacterium marismortui).